Here is a 192-residue protein sequence, read N- to C-terminus: Large ribosomal subunit protein bL9 (192 aa).

Residues 172–192 (DALRPEDFFDPEADGIDEDEA) are disordered. Over residues 179–192 (FFDPEADGIDEDEA) the composition is skewed to acidic residues.

It belongs to the bacterial ribosomal protein bL9 family.

Binds to the 23S rRNA. The polypeptide is Large ribosomal subunit protein bL9 (Rhizobium etli (strain CIAT 652)).